Here is a 275-residue protein sequence, read N- to C-terminus: Phosphate import ATP-binding protein PstB 3 (275 aa).

The interval 1 to 26 (MATQETDDSLISTDVQTDATERGDQP) is disordered. The segment covering 9–18 (SLISTDVQTD) has biased composition (polar residues). One can recognise an ABC transporter domain in the interval 31-270 (VETKHLDVHY…PEDDRVEDYI (240 aa)). 63-70 (GPSGCGKS) contributes to the ATP binding site.

This sequence belongs to the ABC transporter superfamily. Phosphate importer (TC 3.A.1.7) family. The complex is composed of two ATP-binding proteins (PstB), two transmembrane proteins (PstC and PstA) and a solute-binding protein (PstS).

The protein localises to the cell membrane. It catalyses the reaction phosphate(out) + ATP + H2O = ADP + 2 phosphate(in) + H(+). In terms of biological role, part of the ABC transporter complex PstSACB involved in phosphate import. Responsible for energy coupling to the transport system. The chain is Phosphate import ATP-binding protein PstB 3 from Natronomonas pharaonis (strain ATCC 35678 / DSM 2160 / CIP 103997 / JCM 8858 / NBRC 14720 / NCIMB 2260 / Gabara) (Halobacterium pharaonis).